A 354-amino-acid chain; its full sequence is Kelch domain-containing protein 8B (354 aa).

Kelch repeat units lie at residues 1-31 (MAAG…HQDG), 32-79 (HLLV…VLGK), 81-127 (VLVV…ERDG), 128-175 (MVYA…LHGN), 176-222 (KIYV…MAEG), 224-281 (VFSL…SLGG), 282-329 (NIVA…QAGP), and 331-354 (LFVI…RDGV).

It localises to the cytoplasm. It is found in the midbody. Functionally, involved in pinching off the separated nuclei at the cleavage furrow and in cytokinesis. Required for mitotic integrity and maintenance of chromosomal stability. Protects cells against mitotic errors, centrosomal amplification, micronucleus formation and aneuploidy. Plays a key role of midbody function involving abscission of the daughter cells during cytokinesis and appropriate chromosomal and nuclear segregation into the daughter cells. This chain is Kelch domain-containing protein 8B (Klhdc8b), found in Rattus norvegicus (Rat).